The following is a 158-amino-acid chain: Transcription elongation factor GreA (158 aa).

The protein belongs to the GreA/GreB family.

Necessary for efficient RNA polymerase transcription elongation past template-encoded arresting sites. The arresting sites in DNA have the property of trapping a certain fraction of elongating RNA polymerases that pass through, resulting in locked ternary complexes. Cleavage of the nascent transcript by cleavage factors such as GreA or GreB allows the resumption of elongation from the new 3'terminus. GreA releases sequences of 2 to 3 nucleotides. In Rhizobium leguminosarum bv. trifolii (strain WSM2304), this protein is Transcription elongation factor GreA.